An 84-amino-acid chain; its full sequence is MAHKKGGGSTKNGRDSNPKYLGVKAAGGSTVSAGSIIVRQRGTVFKPGNNAGIGKDHTIFALIDGKVSFRNGRNNKKQIDILPV.

Residues 1 to 22 (MAHKKGGGSTKNGRDSNPKYLG) form a disordered region.

Belongs to the bacterial ribosomal protein bL27 family.

The protein is Large ribosomal subunit protein bL27 of Prosthecochloris aestuarii (strain DSM 271 / SK 413).